Reading from the N-terminus, the 752-residue chain is Ribonucleases P/MRP protein subunit popl-1 (752 aa).

Residues 638-663 (KTTKRKRVNRKKRESKKRRKIEQEKR) are disordered. Residues 640-657 (TKRKRVNRKKRESKKRRK) are compositionally biased toward basic residues.

In terms of assembly, component of nuclear RNase P and RNase MRP ribonucleoproteins. Several subunits of RNase P are also part of the RNase MRP complex.

The protein resides in the nucleus. It is found in the nucleolus. It carries out the reaction Endonucleolytic cleavage of RNA, removing 5'-extranucleotides from tRNA precursor.. Functionally, component of ribonuclease P, a ribonucleoprotein complex that generates mature tRNA molecules by cleaving their 5'-ends. Also a component of the MRP ribonuclease complex, which cleaves pre-rRNA sequences. The sequence is that of Ribonucleases P/MRP protein subunit popl-1 from Caenorhabditis elegans.